A 283-amino-acid chain; its full sequence is Putative pyruvate, phosphate dikinase regulatory protein (283 aa).

154–161 is a binding site for ADP; that stretch reads GVSRTSKT.

It belongs to the pyruvate, phosphate/water dikinase regulatory protein family. PDRP subfamily.

The catalysed reaction is N(tele)-phospho-L-histidyl/L-threonyl-[pyruvate, phosphate dikinase] + ADP = N(tele)-phospho-L-histidyl/O-phospho-L-threonyl-[pyruvate, phosphate dikinase] + AMP + H(+). It catalyses the reaction N(tele)-phospho-L-histidyl/O-phospho-L-threonyl-[pyruvate, phosphate dikinase] + phosphate + H(+) = N(tele)-phospho-L-histidyl/L-threonyl-[pyruvate, phosphate dikinase] + diphosphate. In terms of biological role, bifunctional serine/threonine kinase and phosphorylase involved in the regulation of the pyruvate, phosphate dikinase (PPDK) by catalyzing its phosphorylation/dephosphorylation. This chain is Putative pyruvate, phosphate dikinase regulatory protein, found in Afipia carboxidovorans (strain ATCC 49405 / DSM 1227 / KCTC 32145 / OM5) (Oligotropha carboxidovorans).